The chain runs to 294 residues: MPPFSHVPVLADAVLDAARRIPRPDGLLIDATLGGGGHSALLLEQHPGLRLIGLDQDATARAAAAERLASFGDRVSIVATNFADYVPPEPAVMVLADLGVSSPQLDVAERGFSFRLDGPLDMRMNAGGEGETAAELIDRLEENELADLIYGYGEERLSRRIARRIKADLKDRGSYDGTAALAYAVAGCYPPKSRRGRIHPATRTFQALRIAVNDELGVLDRLLQQAPDWLEPDGLLGIISFHSLEDRRVKTAFLRDERLQRITRKPVVATEQEEEANPRTRSAKWRVAQRLAAA.

Residues 36–38 (GGH), aspartate 55, phenylalanine 82, aspartate 97, and glutamine 104 contribute to the S-adenosyl-L-methionine site.

This sequence belongs to the methyltransferase superfamily. RsmH family.

The protein localises to the cytoplasm. The enzyme catalyses cytidine(1402) in 16S rRNA + S-adenosyl-L-methionine = N(4)-methylcytidine(1402) in 16S rRNA + S-adenosyl-L-homocysteine + H(+). Specifically methylates the N4 position of cytidine in position 1402 (C1402) of 16S rRNA. The polypeptide is Ribosomal RNA small subunit methyltransferase H (Synechococcus sp. (strain CC9605)).